An 89-amino-acid chain; its full sequence is Antitoxin RelB (89 aa).

It belongs to the phD/YefM antitoxin family. As to quaternary structure, interacts with toxin RelE, which neutralizes its toxicity. Also interacts with toxins RelG and RelK in vitro, in M.smegmatis coexpression with non-cognate toxins neutralizes the toxicity of RelG while increasing the toxicity of RelK.

Functionally, antitoxin component of a type II toxin-antitoxin (TA) system. Upon expression in M.smegmatis neutralizes the effect of toxin RelE. Its function is as follows. Induces its own promoter, in combination with RelE represses its own promoter. Binds DNA in complex with toxin RelE but not alone. The chain is Antitoxin RelB (relB) from Mycobacterium tuberculosis (strain ATCC 25618 / H37Rv).